An 88-amino-acid polypeptide reads, in one-letter code: Molybdopterin synthase sulfur carrier subunit (88 aa).

Glycine 88 is subject to 1-thioglycine; alternate. The residue at position 88 (glycine 88) is a Glycyl adenylate; alternate.

It belongs to the MoaD family. MOCS2A subfamily. In terms of assembly, heterotetramer; composed of 2 small (MOCS2A) and 2 large (MOCS2B) subunits. In terms of processing, C-terminal thiocarboxylation occurs in 2 steps, it is first acyl-adenylated (-COAMP) via the hesA/moeB/thiF part of MOCS3, then thiocarboxylated (-COSH) via the rhodanese domain of MOCS3. In terms of tissue distribution, widely expressed. Highest levels are found in heart and skeletal muscle. Lower levels are present in brain, kidney and pancreas. Very low levels are found in lung and peripheral blood leukocytes.

It is found in the cytoplasm. It localises to the cytosol. The protein operates within cofactor biosynthesis; molybdopterin biosynthesis. Acts as a sulfur carrier required for molybdopterin biosynthesis. Component of the molybdopterin synthase complex that catalyzes the conversion of precursor Z into molybdopterin by mediating the incorporation of 2 sulfur atoms into precursor Z to generate a dithiolene group. In the complex, serves as sulfur donor by being thiocarboxylated (-COSH) at its C-terminus by MOCS3. After interaction with MOCS2B, the sulfur is then transferred to precursor Z to form molybdopterin. The sequence is that of Molybdopterin synthase sulfur carrier subunit from Homo sapiens (Human).